A 384-amino-acid polypeptide reads, in one-letter code: Beta-ureidopropionase (384 aa).

The 273-residue stretch at 72-344 (VHVGLVQNRI…DGLLVAKLDL (273 aa)) folds into the CN hydrolase domain. Glu119 (proton acceptor) is an active-site residue. Lys196 serves as the catalytic Proton donor. The active-site Nucleophile is Cys233. The residue at position 378 (Ser378) is a Phosphoserine.

This sequence belongs to the carbon-nitrogen hydrolase superfamily. BUP family. Homodimer, homotetramer, homooctamer; can also form higher homooligomers.

Its subcellular location is the cytoplasm. It carries out the reaction 3-(carbamoylamino)propanoate + H2O + 2 H(+) = beta-alanine + NH4(+) + CO2. The enzyme catalyses 3-(carbamoylamino)-2-methylpropanoate + H2O + 2 H(+) = (R)-3-amino-2-methylpropanoate + NH4(+) + CO2. It functions in the pathway amino-acid biosynthesis; beta-alanine biosynthesis. Catalyzes a late step in pyrimidine degradation. Converts N-carbamoyl-beta-alanine (3-ureidopropanoate) into beta-alanine, ammonia and carbon dioxide. Likewise, converts N-carbamoyl-beta-aminoisobutyrate (3-ureidoisobutyrate) into beta-aminoisobutyrate, ammonia and carbon dioxide. In Pongo abelii (Sumatran orangutan), this protein is Beta-ureidopropionase (UPB1).